The sequence spans 463 residues: Glutamate--tRNA ligase 2 (463 aa).

Residues 10 to 20 (PSPTGFLHIGS) carry the 'HIGH' region motif. The short motif at 239 to 243 (KLSKR) is the 'KMSKS' region element. Lysine 242 is an ATP binding site.

The protein belongs to the class-I aminoacyl-tRNA synthetase family. Glutamate--tRNA ligase type 1 subfamily. Monomer.

The protein resides in the cytoplasm. It catalyses the reaction tRNA(Glu) + L-glutamate + ATP = L-glutamyl-tRNA(Glu) + AMP + diphosphate. Catalyzes the attachment of glutamate to tRNA(Glu) in a two-step reaction: glutamate is first activated by ATP to form Glu-AMP and then transferred to the acceptor end of tRNA(Glu). The chain is Glutamate--tRNA ligase 2 from Rickettsia felis (strain ATCC VR-1525 / URRWXCal2) (Rickettsia azadi).